The primary structure comprises 381 residues: Peptidoglycan glycosyltransferase MrdB (381 aa).

10 helical membrane passes run 11–31, 40–60, 66–86, 102–122, 132–152, 156–176, 180–200, 263–283, 297–317, and 328–348; these read FDLL…LLIF, KQGV…FIPF, WLFA…FMGS, ITLQ…AHLI, YDWG…ALIL, DLGT…IVGL, VWLP…HFLH, FGFL…LHLF, IVAL…IAMT, and LPLF…FAIL.

The protein belongs to the SEDS family. MrdB/RodA subfamily.

It is found in the cell inner membrane. The catalysed reaction is [GlcNAc-(1-&gt;4)-Mur2Ac(oyl-L-Ala-gamma-D-Glu-L-Lys-D-Ala-D-Ala)](n)-di-trans,octa-cis-undecaprenyl diphosphate + beta-D-GlcNAc-(1-&gt;4)-Mur2Ac(oyl-L-Ala-gamma-D-Glu-L-Lys-D-Ala-D-Ala)-di-trans,octa-cis-undecaprenyl diphosphate = [GlcNAc-(1-&gt;4)-Mur2Ac(oyl-L-Ala-gamma-D-Glu-L-Lys-D-Ala-D-Ala)](n+1)-di-trans,octa-cis-undecaprenyl diphosphate + di-trans,octa-cis-undecaprenyl diphosphate + H(+). The protein operates within cell wall biogenesis; peptidoglycan biosynthesis. In terms of biological role, peptidoglycan polymerase that is essential for cell wall elongation. In Helicobacter pylori (strain J99 / ATCC 700824) (Campylobacter pylori J99), this protein is Peptidoglycan glycosyltransferase MrdB.